Here is a 905-residue protein sequence, read N- to C-terminus: Probable aromatic-L-amino-acid decarboxylase (905 aa).

Residues 250 to 296 form a disordered region; it reads YLNPIIKTPPHNERVPKMKTNISKTRKKKGKVSDASKDSRPSETKKE. Positions 280–296 are enriched in basic and acidic residues; that stretch reads KVSDASKDSRPSETKKE. Residues T492 and S591 each contribute to the pyridoxal 5'-phosphate site. An N6-(pyridoxal phosphate)lysine modification is found at K648. Residues 861-905 form a disordered region; the sequence is HTAEYADPPGKSNKSPQVAAKGELPSAAPPSSRTPNSDISEKSDR. Residues 889–898 show a composition bias toward polar residues; sequence PPSSRTPNSD.

The protein belongs to the group II decarboxylase family. As to quaternary structure, homodimer. Pyridoxal 5'-phosphate serves as cofactor.

The catalysed reaction is L-dopa + H(+) = dopamine + CO2. It carries out the reaction 5-hydroxy-L-tryptophan + H(+) = serotonin + CO2. It functions in the pathway catecholamine biosynthesis; dopamine biosynthesis; dopamine from L-tyrosine: step 2/2. Catalyzes the decarboxylation of L-3,4-dihydroxyphenylalanine (DOPA) to dopamine, L-5-hydroxytryptophan to serotonin and L-tryptophan to tryptamine. The sequence is that of Probable aromatic-L-amino-acid decarboxylase (hdl-1) from Caenorhabditis elegans.